The primary structure comprises 123 residues: Small ribosomal subunit protein uS12 (123 aa).

Position 89 is a 3-methylthioaspartic acid (aspartate 89).

It belongs to the universal ribosomal protein uS12 family. As to quaternary structure, part of the 30S ribosomal subunit. Contacts proteins S8 and S17. May interact with IF1 in the 30S initiation complex.

Its function is as follows. With S4 and S5 plays an important role in translational accuracy. Functionally, interacts with and stabilizes bases of the 16S rRNA that are involved in tRNA selection in the A site and with the mRNA backbone. Located at the interface of the 30S and 50S subunits, it traverses the body of the 30S subunit contacting proteins on the other side and probably holding the rRNA structure together. The combined cluster of proteins S8, S12 and S17 appears to hold together the shoulder and platform of the 30S subunit. This Acidiphilium cryptum (strain JF-5) protein is Small ribosomal subunit protein uS12.